A 1035-amino-acid chain; its full sequence is Kinesin-like protein KIN-4A (1035 aa).

In terms of domain architecture, Kinesin motor spans 10–369 (CVKVAVHVRP…LKYANRARNI (360 aa)). 89-96 (GQTGSGKT) contacts ATP. Coiled coils occupy residues 380–437 (VADE…LRNH) and 498–702 (MLQD…RKSS). 3 disordered regions span residues 697–720 (EARKSSGRDNSGMNGTSPGSHMTE), 766–787 (VMSGAASPPRGKNGNSRANTLS), and 882–928 (HSES…PLSP). Composition is skewed to polar residues over residues 704–716 (RDNSGMNGTSPGS) and 778–787 (NGNSRANTLS). The stretch at 850–904 (NVAADARCQVREKEMEIKEMKEQMTELVTILRHSESRRRETEKQLKQREQAAVTA) forms a coiled coil. Over residues 882-898 (HSESRRRETEKQLKQRE) the composition is skewed to basic and acidic residues. The span at 902–926 (VTATTSPGNGNGSVKHSADDSNTPL) shows a compositional bias: polar residues. The Nuclear localization signal signature appears at 971–987 (KKVSIAGQSGKLWRWKR). Residues 1014–1035 (DETMTRTRPRPQLLPHRPQRVM) form a disordered region.

The protein belongs to the TRAFAC class myosin-kinesin ATPase superfamily. Kinesin family. KIN-4 subfamily. In terms of assembly, homodimer. As to expression, expressed in young tissues with cell divisions, including initiating adventitious roots, primary root tips, flower primordia, intercalary meristems, sub-epidermal regions of young culms and panicles.

The protein resides in the nucleus. Its subcellular location is the cytoplasm. It localises to the cytoskeleton. With respect to regulation, may be regulated by cyclin-dependent kinase A. Its function is as follows. Microtubule-dependent motor protein involved in the control of the oriented deposition of cellulose microfibrils. Involved in wall biogenesis and modification, and contributes to cell-cycle progression and cell division. Acts as a transcriptional activator in gibberellic acid (GA) biosynthesis pathway. Binds specifically to the DNA sequence 5'-ACCAACTTGAA-3' of the ent-kaurene oxidase 2 (CYP701A6 or OsKO2) promoter. May regulate CYP701A6 gene expression and mediates cell elongation by regulating the GA biosynthesis pathway. This is Kinesin-like protein KIN-4A from Oryza sativa subsp. japonica (Rice).